Reading from the N-terminus, the 504-residue chain is Doublesex- and mab-3-related transcription factor A1 (504 aa).

Positions 1–13 are enriched in basic and acidic residues; that stretch reads MERSQCGSRDRGV. Positions 1–27 are disordered; that stretch reads MERSQCGSRDRGVSGRPHLAPGLVVAA. The segment at residues 97-144 is a DNA-binding region (DM); it reads CARCRNHGVVSALKGHKRFCRWRDCACAKCTLIAERQRVMAAQVALRR. 2 disordered regions span residues 170–192 and 266–307; these read GRAS…AAGA and SISE…NESE. Over residues 293 to 306 the composition is skewed to low complexity; sequence RSLSSSDLESGNES. Positions 327–362 constitute a DMA domain; it reads RDPLDILTKIFPNYRRSRLEGILRFCKGDVVQAIEQ.

It belongs to the DMRT family. Expressed in liver, kidney, pancreas, prostate and weakly detected in testis and ovary.

The protein resides in the nucleus. This is Doublesex- and mab-3-related transcription factor A1 (DMRTA1) from Homo sapiens (Human).